We begin with the raw amino-acid sequence, 320 residues long: Calnexin-independence factor 1 (320 aa).

The interval 16 to 36 (SAETSVGEKQPKRKRSEVRAE) is disordered.

The protein localises to the nucleus. It is found in the nucleolus. In terms of biological role, induces a stably inheritable state of calnexin independence called the Cin state when overexpressed. The protein is Calnexin-independence factor 1 (cif1) of Schizosaccharomyces pombe (strain 972 / ATCC 24843) (Fission yeast).